Here is a 304-residue protein sequence, read N- to C-terminus: Chromo domain-containing protein cec-1 (304 aa).

The Chromo domain maps to 8–66; sequence YTVESILEHRKKKGKSEFYIKWLGYDHTHNSWEPKENIVDPTLIEAFFTREAARKAEIK. Over residues 63 to 73 the composition is skewed to basic and acidic residues; the sequence is AEIKAKKDKMA. Disordered stretches follow at residues 63-235 and 248-304; these read AEIK…EIQL and VEPA…AIIE. Over residues 75–102 the composition is skewed to low complexity; it reads GKKGASSKASASVSKASASTPARGAKAA. Residues 106-116 are compositionally biased toward basic residues; that stretch reads PPKKSPPKRQR. The span at 122–141 shows a compositional bias: basic and acidic residues; it reads IRPDSDTDEEHSSADKKSKA. Composition is skewed to acidic residues over residues 142–152, 163–204, and 212–233; these read EDEEEVEDDEE, EEPE…DVQL, and EEEE…EEEI. A compositionally biased stretch (low complexity) spans 248 to 292; it reads VEPAVATPEPSEPSSSEKAVVENGSSSAAAGNSASKPEVSAVEVV. The segment covering 293-304 has biased composition (acidic residues); sequence TVEDDDDIAIIE.

The protein resides in the nucleus. It is found in the chromosome. This is Chromo domain-containing protein cec-1 (cec-1) from Caenorhabditis elegans.